The chain runs to 328 residues: Nickel import system permease protein NikB (328 aa).

6 helical membrane passes run leucine 11–leucine 31, leucine 104–isoleucine 124, valine 139–isoleucine 159, isoleucine 170–isoleucine 190, isoleucine 229–valine 249, and valine 279–leucine 299. Residues alanine 100–threonine 297 enclose the ABC transmembrane type-1 domain.

It belongs to the binding-protein-dependent transport system permease family. OppBC subfamily. As to quaternary structure, the complex is composed of two ATP-binding proteins (NikD and NikE), two transmembrane proteins (NikB and NikC) and a solute-binding protein (NikA).

The protein localises to the cell membrane. Functionally, part of the ABC transporter complex NikABCDE (Opp2) involved in nickel import. Probably responsible for the translocation of the substrate across the membrane. This Staphylococcus aureus (strain MRSA252) protein is Nickel import system permease protein NikB.